Here is a 213-residue protein sequence, read N- to C-terminus: THAP domain-containing protein 1 (213 aa).

The segment at 1–81 (MVQSCSAYGC…LKENAVPTIF (81 aa)) adopts a THAP-type zinc-finger fold. The HCFC1-binding motif (HBM) signature appears at 134-137 (DHNY). Residues 139–185 (VEDTMHQRKRIHQLEQQVEKLRKKLKTAQQRCRRQERQLEKLKEVVH) form an involved in homodimer formation region. A coiled-coil region spans residues 139–190 (VEDTMHQRKRIHQLEQQVEKLRKKLKTAQQRCRRQERQLEKLKEVVHFQKEK).

This sequence belongs to the THAP1 family. Homodimer. Interacts with PAWR. Component of a THAP1/THAP3-HCFC1-OGT complex that contains, either THAP1 or THAP3, HCFC1 and OGT. Interacts with OGT. Interacts (via the HBM) with HCFC1 (via the Kelch-repeat domain); the interaction recruits HCFC1 to the RRM1 promoter. In terms of tissue distribution, highly expressed in heart, skeletal muscle, kidney and liver. Weaker expression in brain and placenta.

The protein resides in the nucleus. Its subcellular location is the nucleoplasm. It is found in the PML body. In terms of biological role, DNA-binding transcription regulator that regulates endothelial cell proliferation and G1/S cell-cycle progression. Specifically binds the 5'-[AT]NTNN[GT]GGCA[AGT]-3' core DNA sequence and acts by modulating expression of pRB-E2F cell-cycle target genes, including RRM1. Component of a THAP1/THAP3-HCFC1-OGT complex that is required for the regulation of the transcriptional activity of RRM1. May also have pro-apoptotic activity by potentiating both serum-withdrawal and TNF-induced apoptosis. The chain is THAP domain-containing protein 1 (THAP1) from Homo sapiens (Human).